Here is a 497-residue protein sequence, read N- to C-terminus: 4,4'-diaponeurosporene oxygenase (497 aa).

Position 7–19 (7–19 (VIGGGLGGISAAI)) interacts with FAD.

Belongs to the carotenoid/retinoid oxidoreductase family. CrtP subfamily. It depends on FAD as a cofactor.

It carries out the reaction all-trans-4,4'-diaponeurosporene + 2 AH2 + 2 O2 = 4,4'-diaponeurosporenal + 2 A + 3 H2O. Its pathway is carotenoid biosynthesis; staphyloxanthin biosynthesis; staphyloxanthin from farnesyl diphosphate: step 3/5. Involved in the biosynthesis of the yellow-orange carotenoid staphyloxanthin, which plays a role in the virulence via its protective function against oxidative stress. Catalyzes the oxidation of the terminal methyl side group of 4,4'-diaponeurosporene to form 4,4'-diaponeurosporen-4-al. This chain is 4,4'-diaponeurosporene oxygenase, found in Staphylococcus aureus (strain bovine RF122 / ET3-1).